Here is a 123-residue protein sequence, read N- to C-terminus: Small ribosomal subunit protein uS12 (123 aa).

D89 is subject to 3-methylthioaspartic acid.

It belongs to the universal ribosomal protein uS12 family. Part of the 30S ribosomal subunit. Contacts proteins S8 and S17. May interact with IF1 in the 30S initiation complex.

Its function is as follows. With S4 and S5 plays an important role in translational accuracy. Interacts with and stabilizes bases of the 16S rRNA that are involved in tRNA selection in the A site and with the mRNA backbone. Located at the interface of the 30S and 50S subunits, it traverses the body of the 30S subunit contacting proteins on the other side and probably holding the rRNA structure together. The combined cluster of proteins S8, S12 and S17 appears to hold together the shoulder and platform of the 30S subunit. The sequence is that of Small ribosomal subunit protein uS12 from Bartonella bacilliformis (strain ATCC 35685 / KC583 / Herrer 020/F12,63).